The sequence spans 360 residues: UDP-N-acetylglucosamine--N-acetylmuramyl-(pentapeptide) pyrophosphoryl-undecaprenol N-acetylglucosamine transferase (360 aa).

The UDP-N-acetyl-alpha-D-glucosamine site is built by S198 and Q289.

The protein belongs to the glycosyltransferase 28 family. MurG subfamily.

Its subcellular location is the cell membrane. The enzyme catalyses Mur2Ac(oyl-L-Ala-gamma-D-Glu-L-Lys-D-Ala-D-Ala)-di-trans,octa-cis-undecaprenyl diphosphate + UDP-N-acetyl-alpha-D-glucosamine = beta-D-GlcNAc-(1-&gt;4)-Mur2Ac(oyl-L-Ala-gamma-D-Glu-L-Lys-D-Ala-D-Ala)-di-trans,octa-cis-undecaprenyl diphosphate + UDP + H(+). It participates in cell wall biogenesis; peptidoglycan biosynthesis. Functionally, cell wall formation. Catalyzes the transfer of a GlcNAc subunit on undecaprenyl-pyrophosphoryl-MurNAc-pentapeptide (lipid intermediate I) to form undecaprenyl-pyrophosphoryl-MurNAc-(pentapeptide)GlcNAc (lipid intermediate II). This Streptococcus pyogenes serotype M6 (strain ATCC BAA-946 / MGAS10394) protein is UDP-N-acetylglucosamine--N-acetylmuramyl-(pentapeptide) pyrophosphoryl-undecaprenol N-acetylglucosamine transferase.